A 264-amino-acid chain; its full sequence is S-adenosylmethionine decarboxylase proenzyme (264 aa).

S112 (schiff-base intermediate with substrate; via pyruvic acid) is an active-site residue. At S112 the chain carries Pyruvic acid (Ser); by autocatalysis. The active-site Proton acceptor; for processing activity is H117. The Proton donor; for catalytic activity role is filled by C140.

This sequence belongs to the prokaryotic AdoMetDC family. Type 2 subfamily. As to quaternary structure, heterooctamer of four alpha and four beta chains arranged as a tetramer of alpha/beta heterodimers. It depends on pyruvate as a cofactor. Post-translationally, is synthesized initially as an inactive proenzyme. Formation of the active enzyme involves a self-maturation process in which the active site pyruvoyl group is generated from an internal serine residue via an autocatalytic post-translational modification. Two non-identical subunits are generated from the proenzyme in this reaction, and the pyruvate is formed at the N-terminus of the alpha chain, which is derived from the carboxyl end of the proenzyme. The post-translation cleavage follows an unusual pathway, termed non-hydrolytic serinolysis, in which the side chain hydroxyl group of the serine supplies its oxygen atom to form the C-terminus of the beta chain, while the remainder of the serine residue undergoes an oxidative deamination to produce ammonia and the pyruvoyl group blocking the N-terminus of the alpha chain.

The catalysed reaction is S-adenosyl-L-methionine + H(+) = S-adenosyl 3-(methylsulfanyl)propylamine + CO2. It functions in the pathway amine and polyamine biosynthesis; S-adenosylmethioninamine biosynthesis; S-adenosylmethioninamine from S-adenosyl-L-methionine: step 1/1. Its function is as follows. Catalyzes the decarboxylation of S-adenosylmethionine to S-adenosylmethioninamine (dcAdoMet), the propylamine donor required for the synthesis of the polyamines spermine and spermidine from the diamine putrescine. The protein is S-adenosylmethionine decarboxylase proenzyme of Enterobacter sp. (strain 638).